Consider the following 118-residue polypeptide: Ribonuclease P protein component (118 aa).

Belongs to the RnpA family. Consists of a catalytic RNA component (M1 or rnpB) and a protein subunit.

The enzyme catalyses Endonucleolytic cleavage of RNA, removing 5'-extranucleotides from tRNA precursor.. Functionally, RNaseP catalyzes the removal of the 5'-leader sequence from pre-tRNA to produce the mature 5'-terminus. It can also cleave other RNA substrates such as 4.5S RNA. The protein component plays an auxiliary but essential role in vivo by binding to the 5'-leader sequence and broadening the substrate specificity of the ribozyme. This Ureaplasma urealyticum serovar 10 (strain ATCC 33699 / Western) protein is Ribonuclease P protein component.